The following is a 210-amino-acid chain: Calcium-activated potassium channel subunit beta-4 (210 aa).

Residues 1–19 (MAKLRVAYEYTEAEDKSIR) lie on the Cytoplasmic side of the membrane. The helical transmembrane segment at 20–40 (LGLFLIISGVVSLFIFGFCWL) threads the bilayer. Residues 41–167 (SPALQDLQAT…DVLLHRTHDE (127 aa)) are Extracellular-facing. 2 N-linked (GlcNAc...) asparagine glycosylation sites follow: N53 and N90. Residues 168 to 188 (IVLLHCFLWPLVTFVVGVLIV) form a helical membrane-spanning segment. At 189-210 (VLTICAKSLAVKAEAMKKRKFS) the chain is on the cytoplasmic side.

This sequence belongs to the KCNMB (TC 8.A.14.1) family. KCNMB4 subfamily. Interacts with KCNMA1 tetramer. There are probably 4 molecules of KCMNB4 per KCNMA1 tetramer. Interacts with FMR1 (via N-terminus). Post-translationally, phosphorylated. Phosphorylation modulates its effect on KCNMA1 activation kinetics. N-glycosylated. A highly glycosylated form is promoted by KCNMA1. Glycosylation, which is not required for the interaction with KCNMA1 and subcellular location, increases protection against charybdotoxin. Predominantly expressed in brain. In brain, it is expressed in the cerebellum, cerebral cortex, medulla, spinal cord, occipital pole, frontal lobe, temporal lobe, putamen, amygdala, caudate nucleus, corpus callosum, hippocampus, substantia nigra and thalamus. Weakly or not expressed in other tissues.

The protein resides in the membrane. In terms of biological role, regulatory subunit of the calcium activated potassium KCNMA1 (maxiK) channel. Modulates the calcium sensitivity and gating kinetics of KCNMA1, thereby contributing to KCNMA1 channel diversity. Decreases the gating kinetics and calcium sensitivity of the KCNMA1 channel, but with fast deactivation kinetics. May decrease KCNMA1 channel openings at low calcium concentrations but increases channel openings at high calcium concentrations. Makes KCNMA1 channel resistant to 100 nM charybdotoxin (CTX) toxin concentrations. This chain is Calcium-activated potassium channel subunit beta-4 (KCNMB4), found in Homo sapiens (Human).